A 234-amino-acid polypeptide reads, in one-letter code: Protein SOP4 (234 aa).

Positions 1-18 (MFSQIVLLLSAFIYVVSA) are cleaved as a signal peptide. Residues 19-188 (TARRGTIKGR…VGNILNSRWK (170 aa)) lie on the Lumenal side of the membrane. Residues Asn35, Asn53, Asn85, Asn115, and Asn170 are each glycosylated (N-linked (GlcNAc...) asparagine). Residues 189 to 209 (LAGVITLIALVVFPIIVEKLD) traverse the membrane as a helical segment. The Cytoplasmic portion of the chain corresponds to 210 to 234 (PETARAIREEAKRKQREKYAAVASK).

The protein belongs to the SOP4 family.

Its subcellular location is the endoplasmic reticulum membrane. In terms of biological role, involved in the export of PMA1, possibly through the monitoring or assisting of PMA1 folding and acquisition of competence to enter vesicles. The protein is Protein SOP4 (SOP4) of Saccharomyces cerevisiae (strain YJM789) (Baker's yeast).